We begin with the raw amino-acid sequence, 455 residues long: Golgi pH regulator (455 aa).

The next 2 helical transmembrane spans lie at 5 to 25 (IDSS…WLFF) and 46 to 66 (VTFA…LGVL). Asn67 carries N-linked (GlcNAc...) asparagine glycosylation. A run of 3 helical transmembrane segments spans residues 79-99 (LCVI…YFVV), 111-131 (LFAC…GDPF), and 150-170 (VGVI…VNCP). Asn180 and Asn243 each carry an N-linked (GlcNAc...) asparagine glycan. A run of 4 helical transmembrane segments spans residues 290-310 (GYFF…NIVF), 343-363 (ISFI…LITL), 378-398 (VIVL…VLLI), and 425-445 (WFDV…YLAH).

Belongs to the Golgi pH regulator (TC 1.A.38) family. As to quaternary structure, homotrimer.

The protein localises to the golgi apparatus membrane. It catalyses the reaction iodide(out) = iodide(in). The catalysed reaction is chloride(in) = chloride(out). It carries out the reaction bromide(in) = bromide(out). The enzyme catalyses fluoride(in) = fluoride(out). Functionally, voltage-gated channel that enables the transfer of anions such as iodide, chloride, bromide and fluoride which may function in counter-ion conductance and participates in Golgi acidification. This chain is Golgi pH regulator, found in Gallus gallus (Chicken).